A 156-amino-acid chain; its full sequence is Protein CROC-4 (156 aa).

Residues 46-71 (RATSSTTDSSRAPSSPRPPGSTSHCG) form a disordered region. Over residues 48–59 (TSSTTDSSRAPS) the composition is skewed to low complexity.

As to expression, expressed throughout the brain in the thalamus, subthalamic nucleus, corpus callosum, hippocampus, substantia nigra, caudate nucleus, and amygdala.

Its subcellular location is the nucleus. In terms of biological role, may play a role in FOS signaling pathways involved in development and remodeling of neurons. Promotes transcription of the FOS promoter. The sequence is that of Protein CROC-4 from Homo sapiens (Human).